A 248-amino-acid chain; its full sequence is 2,3-bisphosphoglycerate-dependent phosphoglycerate mutase (248 aa).

Residues 10 to 17 (RHGQSEWN), 23 to 24 (TG), Arg-62, 89 to 92 (ERHY), Lys-100, 116 to 117 (RR), and 183 to 184 (GN) each bind substrate. His-11 (tele-phosphohistidine intermediate) is an active-site residue. Catalysis depends on Glu-89, which acts as the Proton donor/acceptor.

It belongs to the phosphoglycerate mutase family. BPG-dependent PGAM subfamily.

It catalyses the reaction (2R)-2-phosphoglycerate = (2R)-3-phosphoglycerate. It participates in carbohydrate degradation; glycolysis; pyruvate from D-glyceraldehyde 3-phosphate: step 3/5. Functionally, catalyzes the interconversion of 2-phosphoglycerate and 3-phosphoglycerate. This chain is 2,3-bisphosphoglycerate-dependent phosphoglycerate mutase, found in Corynebacterium glutamicum (strain ATCC 13032 / DSM 20300 / JCM 1318 / BCRC 11384 / CCUG 27702 / LMG 3730 / NBRC 12168 / NCIMB 10025 / NRRL B-2784 / 534).